The primary structure comprises 274 residues: Prolyl 4-hydroxylase 13 (274 aa).

The Cytoplasmic segment spans residues 1 to 10; it reads MRSYGKEKKL. The chain crosses the membrane as a helical; Signal-anchor for type II membrane protein span at residues 11 to 31; it reads VFPYVFIACCFFLAIFGFCFF. The Lumenal segment spans residues 32–274; it reads NLFSQGISFS…TKWIRDQTYD (243 aa). A Fe2OG dioxygenase domain is found at 151-270; that stretch reads YYESFNILRY…KWVATKWIRD (120 aa). Fe cation-binding residues include His169 and Asp171. N-linked (GlcNAc...) asparagine glycosylation is present at Asn242. Residue His251 participates in Fe cation binding. Lys261 provides a ligand contact to 2-oxoglutarate.

Belongs to the P4HA family. The cofactor is Fe(2+). It depends on L-ascorbate as a cofactor. Expressed in epidermal root hair cells (trichoblasts) root hairless cells (atrichoblasts).

The protein resides in the endoplasmic reticulum membrane. The catalysed reaction is L-prolyl-[collagen] + 2-oxoglutarate + O2 = trans-4-hydroxy-L-prolyl-[collagen] + succinate + CO2. Functionally, catalyzes the post-translational formation of 4-hydroxyproline in -Xaa-Pro-Gly- sequences in proline-rich peptide sequences of plant glycoproteins and other proteins. Hydroxyprolines are important constituent of many plant cell wall glycoproteins such as extensins, hydroxyproline-rich glycoproteins, lectins and arabinogalactan proteins. Possesses high affinity for leucine-rich repeat and proline-rich extensins of root cell walls that are essential for root hair development. Hydroxyprolines define the subsequent O-glycosylation sites by arabinosyltransferases which elongate the O-arabinosides on extensins. This chain is Prolyl 4-hydroxylase 13, found in Arabidopsis thaliana (Mouse-ear cress).